We begin with the raw amino-acid sequence, 207 residues long: Large ribosomal subunit protein bL25 (207 aa).

Belongs to the bacterial ribosomal protein bL25 family. CTC subfamily. Part of the 50S ribosomal subunit; part of the 5S rRNA/L5/L18/L25 subcomplex. Contacts the 5S rRNA. Binds to the 5S rRNA independently of L5 and L18.

This is one of the proteins that binds to the 5S RNA in the ribosome where it forms part of the central protuberance. The chain is Large ribosomal subunit protein bL25 from Rhizorhabdus wittichii (strain DSM 6014 / CCUG 31198 / JCM 15750 / NBRC 105917 / EY 4224 / RW1) (Sphingomonas wittichii).